Consider the following 329-residue polypeptide: Alternative oxidase, mitochondrial (329 aa).

A helical transmembrane segment spans residues 115 to 135 (VISRCLFLETVAGVPGMVGGM). The Fe cation site is built by Glu123, Glu162, and His165. Residues 181–201 (VSIIITQAIMYLFLLVAYVIS) traverse the membrane as a helical segment. 3 residues coordinate Fe cation: Glu213, Glu266, and His269. Positions 300-329 (EMYSNQPSGKTRTDFGSEGAKTASNVNKHV) are disordered.

The protein belongs to the alternative oxidase family. As to quaternary structure, homodimer; disulfide-linked. Fe cation serves as cofactor.

The protein localises to the mitochondrion inner membrane. Functionally, catalyzes cyanide-resistant oxygen consumption. May increase respiration when the cytochrome respiratory pathway is restricted, or in response to low temperatures. This chain is Alternative oxidase, mitochondrial (AOX), found in Trypanosoma brucei brucei.